We begin with the raw amino-acid sequence, 526 residues long: Germ cell-less protein-like 2 (526 aa).

Residues 1 to 85 (MGSSSSRVLG…DKQQPLLNTP (85 aa)) are disordered. The Nuclear localization signal signature appears at 49-55 (SHKRKRS). The span at 62–77 (CDPDSHREEHEEEGDK) shows a compositional bias: basic and acidic residues. A Nuclear localization signal motif is present at residues 85–91 (PARKKLR). A BTB domain is found at 108-178 (SDIKICALGE…LYRDDVLIKP (71 aa)).

Interacts with CUL3. Expressed predominantly in testis.

Its subcellular location is the nucleus matrix. It functions in the pathway protein modification; protein ubiquitination. Functionally, possible function in spermatogenesis. Probable substrate-specific adapter of an E3 ubiquitin-protein ligase complex which mediates the ubiquitination and subsequent proteasomal degradation of target proteins. The sequence is that of Germ cell-less protein-like 2 from Homo sapiens (Human).